Consider the following 323-residue polypeptide: tRNA-modifying protein YgfZ (323 aa).

2 residues coordinate folate: W29 and W182.

This sequence belongs to the tRNA-modifying YgfZ family.

The protein resides in the cytoplasm. Folate-binding protein involved in regulating the level of ATP-DnaA and in the modification of some tRNAs. It is probably a key factor in regulatory networks that act via tRNA modification, such as initiation of chromosomal replication. This Vibrio atlanticus (strain LGP32) (Vibrio splendidus (strain Mel32)) protein is tRNA-modifying protein YgfZ.